Consider the following 314-residue polypeptide: Malate dehydrogenase (314 aa).

Residues 11 to 16 (GSGNIG) and Asp35 each bind NAD(+). Substrate-binding residues include Arg84 and Arg90. NAD(+)-binding positions include Asn97 and 120-122 (ITN). Residues Asn122 and Arg153 each coordinate substrate. The active-site Proton acceptor is the His177.

This sequence belongs to the LDH/MDH superfamily. MDH type 3 family.

The enzyme catalyses (S)-malate + NAD(+) = oxaloacetate + NADH + H(+). In terms of biological role, catalyzes the reversible oxidation of malate to oxaloacetate. This chain is Malate dehydrogenase, found in Rickettsia bellii (strain RML369-C).